The primary structure comprises 529 residues: Bifunctional purine biosynthesis protein PurH (529 aa).

Residues 1-148 (MQQHRPVRRA…KNHKDVAIVV (148 aa)) enclose the MGS-like domain.

This sequence belongs to the PurH family.

It catalyses the reaction (6R)-10-formyltetrahydrofolate + 5-amino-1-(5-phospho-beta-D-ribosyl)imidazole-4-carboxamide = 5-formamido-1-(5-phospho-D-ribosyl)imidazole-4-carboxamide + (6S)-5,6,7,8-tetrahydrofolate. The enzyme catalyses IMP + H2O = 5-formamido-1-(5-phospho-D-ribosyl)imidazole-4-carboxamide. It participates in purine metabolism; IMP biosynthesis via de novo pathway; 5-formamido-1-(5-phospho-D-ribosyl)imidazole-4-carboxamide from 5-amino-1-(5-phospho-D-ribosyl)imidazole-4-carboxamide (10-formyl THF route): step 1/1. Its pathway is purine metabolism; IMP biosynthesis via de novo pathway; IMP from 5-formamido-1-(5-phospho-D-ribosyl)imidazole-4-carboxamide: step 1/1. This Erwinia tasmaniensis (strain DSM 17950 / CFBP 7177 / CIP 109463 / NCPPB 4357 / Et1/99) protein is Bifunctional purine biosynthesis protein PurH.